A 149-amino-acid polypeptide reads, in one-letter code: MNKGHRHIIIRELITSNEIDTQEDLVELLLERDVKVTQATVSRDIKELHLVKVPTQTGGYKYSLPADNSFNPHQKLKRALIDCFIGIDNVQFMIILKVMPGNGNSVGALIDNLDWPEKAGTICGDDTCLIICRSEENAKTLTDRFIDML.

The protein belongs to the ArgR family.

The protein resides in the cytoplasm. The protein operates within amino-acid biosynthesis; L-arginine biosynthesis [regulation]. Functionally, regulates arginine biosynthesis genes. In Listeria monocytogenes serotype 4b (strain F2365), this protein is Arginine repressor.